The following is an 85-amino-acid chain: Insecticidal toxin Vn1 (85 aa).

The N-terminal stretch at 1 to 23 is a signal peptide; it reads MFLYRLICLFILICIITVDISTS. A disulfide bridge connects residues cysteine 71 and cysteine 84.

As to expression, highly expressed in the venom apparatus, and weakly expressed in residual body.

It is found in the secreted. Its function is as follows. Endoparasitoid venom toxin that exhibits insecticidal activity against Tenebrio molitor pupae. Impacts genes related to immune response, environmental information processing, metabolism, and response to external stimuli in T.molitor, suggesting its involvement in the intricate parasitoid wasp-host interaction. The polypeptide is Insecticidal toxin Vn1 (Aphidius gifuensis (Parasitoid wasp)).